Here is a 244-residue protein sequence, read N- to C-terminus: 5-oxoprolinase subunit A (244 aa).

This sequence belongs to the LamB/PxpA family. In terms of assembly, forms a complex composed of PxpA, PxpB and PxpC.

The catalysed reaction is 5-oxo-L-proline + ATP + 2 H2O = L-glutamate + ADP + phosphate + H(+). Its function is as follows. Catalyzes the cleavage of 5-oxoproline to form L-glutamate coupled to the hydrolysis of ATP to ADP and inorganic phosphate. In Escherichia coli (strain K12), this protein is 5-oxoprolinase subunit A.